Here is a 278-residue protein sequence, read N- to C-terminus: 1-acyl-sn-glycerol-3-phosphate acyltransferase beta (278 aa).

The first 23 residues, 1-23 (MELWPCLAAALLLLLLLVQLSRA), serve as a signal peptide directing secretion. At 24–29 (AEFYAK) the chain is on the lumenal side. A helical transmembrane segment spans residues 30–50 (VALYCALCFTVSAVASLVCLL). At 51–121 (RHGGRTVENM…PERCVQIAKR (71 aa)) the chain is on the cytoplasmic side. An HXXXXD motif motif is present at residues 98-103 (HQSILD). Residues 122–142 (ELLFLGPVGLIMYLGGVFFIN) traverse the membrane as a helical segment. The Lumenal portion of the chain corresponds to 143 to 278 (RQRSSTAMTV…TAGSGVQPAQ (136 aa)). An EGTR motif motif is present at residues 172–175 (EGTR).

Belongs to the 1-acyl-sn-glycerol-3-phosphate acyltransferase family. As to expression, expressed predominantly in adipose tissue, pancreas and liver.

The protein localises to the endoplasmic reticulum membrane. The catalysed reaction is a 1-acyl-sn-glycero-3-phosphate + an acyl-CoA = a 1,2-diacyl-sn-glycero-3-phosphate + CoA. It catalyses the reaction 1-(9Z-octadecenoyl)-sn-glycero-3-phosphate + (9Z)-octadecenoyl-CoA = 1,2-di-(9Z-octadecenoyl)-sn-glycero-3-phosphate + CoA. It carries out the reaction 1-(9Z-octadecenoyl)-sn-glycero-3-phosphate + hexadecanoyl-CoA = 1-(9Z)-octadecenoyl-2-hexadecanoyl-sn-glycero-3-phosphate + CoA. The enzyme catalyses heptadecanoyl-CoA + 1-(9Z-octadecenoyl)-sn-glycero-3-phosphate = 1-(9Z)-octadecenoyl-2-heptadecanoyl-sn-glycero-3-phosphate + CoA. The catalysed reaction is 1-(9Z-octadecenoyl)-sn-glycero-3-phosphate + (9Z,12Z)-octadecadienoyl-CoA = 1-(9Z)-octadecenoyl-2-(9Z,12Z)-octadecadienoyl-sn-glycero-3-phosphate + CoA. It catalyses the reaction 1-(9Z-octadecenoyl)-sn-glycero-3-phosphate + tetradecanoyl-CoA = 1-(9Z)-octadecenoyl-2-tetradecanoyl-sn-glycero-3-phosphate + CoA. It carries out the reaction pentadecanoyl-CoA + 1-(9Z-octadecenoyl)-sn-glycero-3-phosphate = 1-(9Z)-octadecenoyl-2-pentadecanoyl-sn-glycero-3-phosphate + CoA. The enzyme catalyses 1-hexadecanoyl-sn-glycero-3-phosphate + (9Z)-octadecenoyl-CoA = 1-hexadecanoyl-2-(9Z-octadecenoyl)-sn-glycero-3-phosphate + CoA. The catalysed reaction is 1-tetradecanoyl-sn-glycerol 3-phosphate + (9Z)-octadecenoyl-CoA = 1-tetradecanoyl-2-(9Z)-octadecenoyl-sn-glycero-3-phosphate + CoA. It catalyses the reaction 1-(9Z,12Z,15Z)-octadecatrienoyl-sn-glycero-3-phosphate + (9Z)-octadecenoyl-CoA = 1-(9Z,12Z,15Z)-octadecatrienoyl-2-(9Z)-octadecenoyl-sn-glycero-3-phosphate + CoA. It carries out the reaction 1-(6Z,9Z,12Z-octadecatrienoyl)-sn-glycero-3-phosphate + (9Z)-octadecenoyl-CoA = (6Z,9Z,12Z)-octadecatrienoyl-2-(9Z)-octadecenoyl-sn-glycero-3-phosphate + CoA. The enzyme catalyses 1-eicosanoyl-sn-glycero-3-phosphate + (9Z)-octadecenoyl-CoA = 1-eicosanoyl-2-(9Z)-octadecenoyl-sn-glycero-3-phosphate + CoA. The catalysed reaction is 1-hexadecanoyl-sn-glycero-3-phosphate + octadecanoyl-CoA = 1-hexadecanoyl-2-octadecanoyl-sn-glycero-3-phosphate + CoA. It catalyses the reaction 1-hexadecanoyl-sn-glycero-3-phosphate + (5Z,8Z,11Z,14Z)-eicosatetraenoyl-CoA = 1-hexadecanoyl-2-(5Z,8Z,11Z,14Z-eicosatetraenoyl)-sn-glycero-3-phosphate + CoA. It carries out the reaction 1-hexadecanoyl-sn-glycero-3-phosphate + hexadecanoyl-CoA = 1,2-dihexadecanoyl-sn-glycero-3-phosphate + CoA. The enzyme catalyses 1-hexadecanoyl-sn-glycero-3-phosphate + tetradecanoyl-CoA = 1-hexadecanoyl-2-tetradecanoyl-sn-glycero-3-phosphate + CoA. The catalysed reaction is (11Z)-octadecenoyl-CoA + 1-(9Z-octadecenoyl)-sn-glycero-3-phosphate = 1-(9Z)-octadecenoyl-2-(11Z)-octadecenoyl-sn-glycero-3-phosphate + CoA. It participates in phospholipid metabolism; CDP-diacylglycerol biosynthesis; CDP-diacylglycerol from sn-glycerol 3-phosphate: step 2/3. Its function is as follows. Converts 1-acyl-sn-glycerol-3-phosphate (lysophosphatidic acid or LPA) into 1,2-diacyl-sn-glycerol-3-phosphate (phosphatidic acid or PA) by incorporating an acyl moiety at the sn-2 position of the glycerol backbone. The polypeptide is 1-acyl-sn-glycerol-3-phosphate acyltransferase beta (AGPAT2) (Homo sapiens (Human)).